The chain runs to 446 residues: MAAQVTPELANLNSKPEGGAPPKQVPVKDVPENEDVESDDDNEGDQGAGEPGSTGAAKKKKKKKPKKKKKGGPKVQTEPPRVILSSIFPNNDYPVGELVEYKDDNAYRTTNEEKRYLDRMNNDFLSEYRYAAEVHRQVRQYAQKTIKPGQTLTEIAEGIEDSVRALTGHDGLTEGDNLLGGIAFPTGVNLNHCAAHYSPNAGNKMVLQYEDVMKVDFGVHINGRIVDSAFTVAFDPVYDNLLAAVKDATNTGIREAGIDVRMSDIGAAIQETMESYEVEIKGTTYPVKPIRNLNGHTIGQFEIHGGKNGKSVPIVKGGDQSKMEEGEVYAIETFGSTGRGYVRDDMETSHYAKVPDAPNVPLRLSSAKNLLNVITKNFGTLPFCRRYLDRLGQDKYLLGLNNLVANGIVDAYPPLCDIKGSYTAQFEHTILLRPNIKEVISRGYDY.

Residues 1 to 88 are disordered; the sequence is MAAQVTPELA…PPRVILSSIF (88 aa). Positions 32-44 are enriched in acidic residues; that stretch reads ENEDVESDDDNEG. The span at 57-72 shows a compositional bias: basic residues; it reads AKKKKKKKPKKKKKGG. His-196 serves as a coordination point for substrate. Asp-216, Asp-227, and His-296 together coordinate a divalent metal cation. His-304 is a binding site for substrate. 2 residues coordinate a divalent metal cation: Glu-332 and Glu-427.

The protein belongs to the peptidase M24A family. Methionine aminopeptidase eukaryotic type 2 subfamily. Requires Co(2+) as cofactor. Zn(2+) is required as a cofactor. It depends on Mn(2+) as a cofactor. The cofactor is Fe(2+).

The protein localises to the cytoplasm. The catalysed reaction is Release of N-terminal amino acids, preferentially methionine, from peptides and arylamides.. Cotranslationally removes the N-terminal methionine from nascent proteins. The N-terminal methionine is often cleaved when the second residue in the primary sequence is small and uncharged (Met-Ala-, Cys, Gly, Pro, Ser, Thr, or Val). This chain is Methionine aminopeptidase 2-1, found in Blastomyces gilchristii (strain SLH14081) (Blastomyces dermatitidis).